We begin with the raw amino-acid sequence, 251 residues long: 1-(5-phosphoribosyl)-5-[(5-phosphoribosylamino)methylideneamino] imidazole-4-carboxamide isomerase (251 aa).

Residue Asp-8 is the Proton acceptor of the active site. Asp-131 acts as the Proton donor in catalysis.

Belongs to the HisA/HisF family.

It localises to the cytoplasm. It catalyses the reaction 1-(5-phospho-beta-D-ribosyl)-5-[(5-phospho-beta-D-ribosylamino)methylideneamino]imidazole-4-carboxamide = 5-[(5-phospho-1-deoxy-D-ribulos-1-ylimino)methylamino]-1-(5-phospho-beta-D-ribosyl)imidazole-4-carboxamide. It functions in the pathway amino-acid biosynthesis; L-histidine biosynthesis; L-histidine from 5-phospho-alpha-D-ribose 1-diphosphate: step 4/9. This is 1-(5-phosphoribosyl)-5-[(5-phosphoribosylamino)methylideneamino] imidazole-4-carboxamide isomerase from Burkholderia lata (strain ATCC 17760 / DSM 23089 / LMG 22485 / NCIMB 9086 / R18194 / 383).